The chain runs to 426 residues: MTHLLDDLAWRGLIAQSTDLEALRAAMNTGPITVYCGFDPTAPSLHIGHLVQILTLRRFQDAGHRPIALVGGATGLIGDPSGRTTERALNDPDVVAGWAERIHRQLAPFLDFTGERAGQPAIAVNNLEWTGRLTAIEFLRDVGKHFRVGRMLAKEVVAARLRSEQGISYTEFSYQILQSLDFLELYRRYRCVLQIGGIDQWGNLTSGIELIHKVEGVDVHALATPLVTKADGTKFGKTAGGAVWLDPALTSPYAFYQFWINTDDRDVPAYLRYFSLKNKDELEALEKDAGRDPAARLGQRALAEELTTLVHGATECGKVVAASAALFGRGELAGVEPETLAAALAEAGLVTMPFDPPPRVVDALVATGLVESRSAARRVISEGGAYVNNEKVTDVDAQIDPGRLLHGRWAVIRRGRRAVAGVERAG.

Y35 lines the L-tyrosine pocket. The 'HIGH' region signature appears at 40 to 49 (PTAPSLHIGH). Residues Y174 and Q178 each contribute to the L-tyrosine site. Residues 234–238 (KFGKT) carry the 'KMSKS' region motif. An ATP-binding site is contributed by K237. The 61-residue stretch at 358-418 (PRVVDALVAT…WAVIRRGRRA (61 aa)) folds into the S4 RNA-binding domain.

It belongs to the class-I aminoacyl-tRNA synthetase family. TyrS type 1 subfamily. Homodimer.

It is found in the cytoplasm. It catalyses the reaction tRNA(Tyr) + L-tyrosine + ATP = L-tyrosyl-tRNA(Tyr) + AMP + diphosphate + H(+). Its function is as follows. Catalyzes the attachment of tyrosine to tRNA(Tyr) in a two-step reaction: tyrosine is first activated by ATP to form Tyr-AMP and then transferred to the acceptor end of tRNA(Tyr). This chain is Tyrosine--tRNA ligase, found in Acidothermus cellulolyticus (strain ATCC 43068 / DSM 8971 / 11B).